We begin with the raw amino-acid sequence, 200 residues long: Nucleoside triphosphate pyrophosphatase (200 aa).

Asp75 functions as the Proton acceptor in the catalytic mechanism.

It belongs to the Maf family. A divalent metal cation is required as a cofactor.

It localises to the cytoplasm. The enzyme catalyses a ribonucleoside 5'-triphosphate + H2O = a ribonucleoside 5'-phosphate + diphosphate + H(+). It carries out the reaction a 2'-deoxyribonucleoside 5'-triphosphate + H2O = a 2'-deoxyribonucleoside 5'-phosphate + diphosphate + H(+). Functionally, nucleoside triphosphate pyrophosphatase. May have a dual role in cell division arrest and in preventing the incorporation of modified nucleotides into cellular nucleic acids. This is Nucleoside triphosphate pyrophosphatase from Synechococcus sp. (strain CC9311).